Reading from the N-terminus, the 1108-residue chain is Mediator of RNA polymerase II transcription subunit 14 (1108 aa).

Disordered stretches follow at residues 1–30 (MAAVMMNGVGPDGAMKPNLDQKLNNHGGDT), 35–54 (SSEIVQQQTPARSLQSDNPL), and 1048–1108 (QQQR…VDLT). Polar residues predominate over residues 35–52 (SSEIVQQQTPARSLQSDN). Low complexity predominate over residues 1048–1080 (QQQRQPVVQPGQQPQVQNQANGVMNRGPQRPGL).

It belongs to the Mediator complex subunit 14 family. Component of the Mediator complex.

The protein localises to the nucleus. Its function is as follows. Component of the Mediator complex, a coactivator involved in the regulated transcription of nearly all RNA polymerase II-dependent genes. Mediator functions as a bridge to convey information from gene-specific regulatory proteins to the basal RNA polymerase II transcription machinery. Mediator is recruited to promoters by direct interactions with regulatory proteins and serves as a scaffold for the assembly of a functional preinitiation complex with RNA polymerase II and the general transcription factors. The chain is Mediator of RNA polymerase II transcription subunit 14 (RGR1) from Pyricularia oryzae (strain 70-15 / ATCC MYA-4617 / FGSC 8958) (Rice blast fungus).